The following is a 226-amino-acid chain: RNA annealing protein YRA1 (226 aa).

Residues 1–62 (MSANLDKSLD…PIRKNTRAPP (62 aa)) form a disordered region. Position 2 is an N-acetylserine (Ser2). 2 positions are modified to phosphoserine: Ser8 and Ser100. One can recognise an RRM domain in the interval 78–158 (VKVNVEGLPR…SRLRLNLIVD (81 aa)). The disordered stretch occupies residues 173 to 226 (AMPQKGGNAPRPVKRGPNRKAAMAKSQNKPKREKPAKKSLEDLDKEMADYFEKK). Over residues 208–226 (AKKSLEDLDKEMADYFEKK) the composition is skewed to basic and acidic residues.

As to quaternary structure, component of the transcription/export (TREX) complex, which is at least is formed of SUB2, TEX1 and YRA1 and the THO complex composed of HPR1, MFT1, THO2 and THP1. Interacts with RDS3 and YRA2.

The protein resides in the nucleus. RNA-binding RNA annealing protein. May have a role in pre-mRNA metabolism. Component the TREX complex, which operates in coupling transcription elongation to mRNA export. In Saccharomyces cerevisiae (strain ATCC 204508 / S288c) (Baker's yeast), this protein is RNA annealing protein YRA1 (YRA1).